The primary structure comprises 85 residues: Large ribosomal subunit protein bL27 (85 aa).

The interval 1–20 is disordered; the sequence is MAHKKAAGSSRNGRDSNPKM.

The protein belongs to the bacterial ribosomal protein bL27 family.

In Psychrobacter arcticus (strain DSM 17307 / VKM B-2377 / 273-4), this protein is Large ribosomal subunit protein bL27.